The primary structure comprises 162 residues: ATP synthase subunit b (162 aa).

A helical membrane pass occupies residues 6–28 (LVTFVLTIVNILVLFYLLKRFLF).

It belongs to the ATPase B chain family. In terms of assembly, F-type ATPases have 2 components, F(1) - the catalytic core - and F(0) - the membrane proton channel. F(1) has five subunits: alpha(3), beta(3), gamma(1), delta(1), epsilon(1). F(0) has three main subunits: a(1), b(2) and c(10-14). The alpha and beta chains form an alternating ring which encloses part of the gamma chain. F(1) is attached to F(0) by a central stalk formed by the gamma and epsilon chains, while a peripheral stalk is formed by the delta and b chains.

It localises to the cell membrane. Functionally, f(1)F(0) ATP synthase produces ATP from ADP in the presence of a proton or sodium gradient. F-type ATPases consist of two structural domains, F(1) containing the extramembraneous catalytic core and F(0) containing the membrane proton channel, linked together by a central stalk and a peripheral stalk. During catalysis, ATP synthesis in the catalytic domain of F(1) is coupled via a rotary mechanism of the central stalk subunits to proton translocation. Component of the F(0) channel, it forms part of the peripheral stalk, linking F(1) to F(0). This is ATP synthase subunit b from Natranaerobius thermophilus (strain ATCC BAA-1301 / DSM 18059 / JW/NM-WN-LF).